Consider the following 526-residue polypeptide: Bifunctional purine biosynthesis protein PurH (526 aa).

Residues 1–147 enclose the MGS-like domain; sequence MPSIKRALIS…KNWKHVAIVT (147 aa).

It belongs to the PurH family.

It catalyses the reaction (6R)-10-formyltetrahydrofolate + 5-amino-1-(5-phospho-beta-D-ribosyl)imidazole-4-carboxamide = 5-formamido-1-(5-phospho-D-ribosyl)imidazole-4-carboxamide + (6S)-5,6,7,8-tetrahydrofolate. The catalysed reaction is IMP + H2O = 5-formamido-1-(5-phospho-D-ribosyl)imidazole-4-carboxamide. Its pathway is purine metabolism; IMP biosynthesis via de novo pathway; 5-formamido-1-(5-phospho-D-ribosyl)imidazole-4-carboxamide from 5-amino-1-(5-phospho-D-ribosyl)imidazole-4-carboxamide (10-formyl THF route): step 1/1. It functions in the pathway purine metabolism; IMP biosynthesis via de novo pathway; IMP from 5-formamido-1-(5-phospho-D-ribosyl)imidazole-4-carboxamide: step 1/1. This is Bifunctional purine biosynthesis protein PurH from Neisseria meningitidis serogroup C / serotype 2a (strain ATCC 700532 / DSM 15464 / FAM18).